A 1482-amino-acid chain; its full sequence is Type VII secretion system protein EssC (1482 aa).

Residues 1 to 229 lie on the Cytoplasmic side of the membrane; that stretch reads MHKLIIKYNK…RPPQPIQKNN (229 aa). The chain crosses the membrane as a helical span at residues 230–252; it reads TVIWRSIIPPLVMIALTVVIFLV. At 253–256 the chain is on the extracellular side; that stretch reads RPIG. A helical transmembrane segment spans residues 257–279; that stretch reads IYILMMIGMSTVTIVFGITTYFS. At 280–1482 the chain is on the cytoplasmic side; it reads EKKKYNKDVE…EYQKIKLMEG (1203 aa). FtsK domains are found at residues 652–846 and 997–1183; these read DDIL…QDSN and QGPM…NELT. Residues 672–679 and 1014–1021 each bind ATP; these read GTTGSGKS and GSPGYGRT.

It belongs to the EssC family. As to quaternary structure, homooligomer. Interacts with EsaE.

It is found in the cell membrane. Component of the type VII secretion system (Ess). Required for the secretion of substrates including EsxA and EsxB. However, unable to support secretion of the substrate protein EsxC. The chain is Type VII secretion system protein EssC from Staphylococcus aureus (strain MRSA252).